We begin with the raw amino-acid sequence, 384 residues long: Substance-K receptor (384 aa).

The Extracellular segment spans residues 1–32 (MGAHASVTDTNILSGLESNATGVTAFSMPGWQ). N19 carries an N-linked (GlcNAc...) asparagine glycan. A helical transmembrane segment spans residues 33-56 (LALWATAYLALVLVAVTGNATVIW). Residues 57–69 (IILAHERMRTVTN) lie on the Cytoplasmic side of the membrane. The helical transmembrane segment at 70-90 (YFIINLALADLCMAAFNATFN) threads the bilayer. Over 91 to 107 (FIYASHNIWYFGSTFCY) the chain is Extracellular. A disulfide bond links C106 and C181. A helical transmembrane segment spans residues 108–129 (FQNLFPVTAMFVSIYSMTAIAA). The Cytoplasmic portion of the chain corresponds to 130–149 (DRYMAIVHPFQPRLSAPSTK). The chain crosses the membrane as a helical span at residues 150–170 (AVIAVIWLVALALASPQCFYS). Topologically, residues 171–196 (TITVDQGATKCVVAWPNDNGGKMLLL) are extracellular. A helical membrane pass occupies residues 197–218 (YHLVVFVLIYFLPLVVMFAAYS). At 219–251 (VIGLTLWKRAVPRHQAHGANLRHLQAKKKFVKA) the chain is on the cytoplasmic side. The chain crosses the membrane as a helical span at residues 252–272 (MVLVVVTFAICWLPYHLYFIL). The Extracellular portion of the chain corresponds to 273-290 (GTFQEDIYYRKFIQQVYL). The chain crosses the membrane as a helical span at residues 291 to 310 (ALFWLAMSSTMYNPIIYCCL). The Cytoplasmic portion of the chain corresponds to 311–384 (NHRFRSGFRL…GPQDGEPAGP (74 aa)). Residue C324 is the site of S-palmitoyl cysteine attachment. The interval 365–384 (HSEATNGQVGGPQDGEPAGP) is disordered.

It belongs to the G-protein coupled receptor 1 family.

The protein resides in the cell membrane. Its function is as follows. This is a receptor for the tachykinin neuropeptide substance K (neurokinin A). It is associated with G proteins that activate a phosphatidylinositol-calcium second messenger system. The rank order of affinity of this receptor to tachykinins is: substance K &gt; neuromedin-K &gt; substance P. This Mus musculus (Mouse) protein is Substance-K receptor (Tacr2).